A 252-amino-acid chain; its full sequence is Receptor expression-enhancing protein 3-B (252 aa).

3 consecutive transmembrane segments (helical) span residues 1 to 21 (MVSG…YPAY), 35 to 55 (YVRW…ETIA), and 57 to 77 (LTVS…VWLL). The interval 163–225 (ETAETRFFPD…GLRRSQSMRS (63 aa)) is disordered. Residues 198-211 (RTDEDVEVNSEDEV) are compositionally biased toward acidic residues.

Belongs to the DP1 family.

It localises to the endoplasmic reticulum membrane. In terms of biological role, microtubule-binding protein required to ensure proper cell division and nuclear envelope reassembly by sequestering the endoplasmic reticulum away from chromosomes during mitosis. Probably acts by clearing the endoplasmic reticulum membrane from metaphase chromosomes. In Xenopus laevis (African clawed frog), this protein is Receptor expression-enhancing protein 3-B (reep3-b).